Consider the following 490-residue polypeptide: MNADHHLQQQQQQRQQHQQQQHQQQQHQHQHQQQQHTILQNVSNTNNIGSDSLASQPFNTTTVSSNKDDVMVNSGARELPMPLHQQQYIYPYYQYTSNNSNNNNVTAGNNMSASPIVHNNSNNSNNSNISASDYTVANNSTSNNNNNNNNNNNNNNNIHPNQFTAAANMNSNAAAAAYYSFPTANMPIPQQDQQYMFNPASYISHYYSAVNSNNNGNNAANNGSNNSSHSAPAPAPGPPHHHHHHSNTHNNLNNGGAVNTNNAPQHHPTIITDQFQFQLQQNPSPNLNLNINPAQPLHLPPGWKINTMPQPRPTTAPNHPPAPVPSSNPVASNLVPAPSSDHKYIHQCQFCEKSFKRKSWLKRHLLSHSQQRHFLCPWCLSRQKRKDNLLQHMKLKHTNYLLDELKKNNIIFNYNNSSSSNNNNDNNNNNNSNSASGSGGAGAAAAAATAPENEDGNGYDTNIKTLINDGVLNKDDVKRVLNNLIVSHNK.

The residue at position 1 (methionine 1) is an N-acetylmethionine. 3 disordered regions span residues methionine 1–aspartate 69, asparagine 101–glutamine 162, and asparagine 214–histidine 267. The span at glutamine 8–histidine 36 shows a compositional bias: low complexity. Residues threonine 37–serine 65 are compositionally biased toward polar residues. The prion domain (PrD) stretch occupies residues asparagine 98–glutamine 295. Composition is skewed to low complexity over residues asparagine 119–asparagine 128, asparagine 138–asparagine 157, asparagine 214–proline 232, and threonine 248–proline 264. C2H2-type zinc fingers lie at residues histidine 346–histidine 368 and phenylalanine 374–histidine 397. The span at asparagine 421 to serine 436 shows a compositional bias: low complexity. The interval asparagine 421–glycine 458 is disordered.

It localises to the nucleus. In terms of biological role, transcription factor that affects the expression of a large set of genes. Recognizes and binds to the consensus sequence 5'-[CAT]AGG[TC]A-3' in the promoter region. Plays a major role in the repression of a specific subset of hypoxic genes (e.g. ANB1, DAN1 and HEM13) under aerobic conditions. Acts synergistically with the transcription factor ROX1 to recruit the general repression complex SSN6-TUP1 to the promoter of hypoxic genes. Represses transcription of ergosterol biosynthetic genes. Negatively regulates pheromone-induced gene expression. Can act as a transcriptional activator (e.g. of genes like CYC1, SUC2 and the Ty long terminal repeat delta promoter). The protein is Transcriptional activator/repressor MOT3 (MOT3) of Saccharomyces cerevisiae (strain ATCC 204508 / S288c) (Baker's yeast).